Consider the following 462-residue polypeptide: Chitinase 1 (462 aa).

The first 17 residues, 1-17 (MILNLIILLAISIVASA), serve as a signal peptide directing secretion. The 274-residue stretch at 18-291 (SNIAAYWGQN…NQLYQALSGS (274 aa)) folds into the GH18 domain. A glycan (N-linked (GlcNAc...) asparagine) is linked at Asn-57. Glu-147 (proton donor) is an active-site residue.

It belongs to the glycosyl hydrolase 18 family. Chitinase class III subfamily.

It is found in the secreted. It catalyses the reaction Random endo-hydrolysis of N-acetyl-beta-D-glucosaminide (1-&gt;4)-beta-linkages in chitin and chitodextrins.. This is Chitinase 1 (CHT1) from Candida albicans (Yeast).